The chain runs to 89 residues: Elongation factor 1-beta (89 aa).

The protein belongs to the EF-1-beta/EF-1-delta family.

In terms of biological role, promotes the exchange of GDP for GTP in EF-1-alpha/GDP, thus allowing the regeneration of EF-1-alpha/GTP that could then be used to form the ternary complex EF-1-alpha/GTP/AAtRNA. The chain is Elongation factor 1-beta from Methanococcus maripaludis (strain C6 / ATCC BAA-1332).